Consider the following 246-residue polypeptide: Ribonuclease 3 (246 aa).

The RNase III domain occupies 18-147; it reads FQELQKKIGI…FIGALYLDQG (130 aa). Mg(2+) is bound at residue E60. D64 is a catalytic residue. Positions 133 and 136 each coordinate Mg(2+). The active site involves E136. The DRBM domain maps to 173-242; that stretch reads DFKSQLQELV…AQMALETLRA (70 aa).

Belongs to the ribonuclease III family. As to quaternary structure, homodimer. The cofactor is Mg(2+).

The protein resides in the cytoplasm. The enzyme catalyses Endonucleolytic cleavage to 5'-phosphomonoester.. Digests double-stranded RNA. Involved in the processing of primary rRNA transcript to yield the immediate precursors to the large and small rRNAs (23S and 16S). Processes some mRNAs, and tRNAs when they are encoded in the rRNA operon. Processes pre-crRNA and tracrRNA of type II CRISPR loci if present in the organism. This Geobacillus thermodenitrificans (strain NG80-2) protein is Ribonuclease 3.